Consider the following 60-residue polypeptide: UPF0434 protein Daci_3569 (60 aa).

It belongs to the UPF0434 family.

This chain is UPF0434 protein Daci_3569, found in Delftia acidovorans (strain DSM 14801 / SPH-1).